Reading from the N-terminus, the 162-residue chain is Peptidyl-prolyl cis-trans isomerase-like 1 (162 aa).

A PPIase cyclophilin-type domain is found at 1–155 (MATDVAFDTS…DGVKILRARI (155 aa)).

The protein belongs to the cyclophilin-type PPIase family. PPIL1 subfamily.

The catalysed reaction is [protein]-peptidylproline (omega=180) = [protein]-peptidylproline (omega=0). PPIases accelerate the folding of proteins. It catalyzes the cis-trans isomerization of proline imidic peptide bonds in oligopeptides. The protein is Peptidyl-prolyl cis-trans isomerase-like 1 (cypC) of Aspergillus niger.